Consider the following 819-residue polypeptide: Deubiquitinase MYSM1 (819 aa).

Residues 1 to 12 (MEAEEADVDVEG) show a composition bias toward acidic residues. The segment at 1 to 29 (MEAEEADVDVEGDVAAAAQPGNDESTASV) is disordered. Serine 107 bears the Phosphoserine mark. Residues 113 to 164 (SHSVKWTVEEKELFEQGLAKFGRRWTKIATLLKSRTVLQVKSYARQYFKNKV) form the SANT domain. Lysine 184 participates in a covalent cross-link: Glycyl lysine isopeptide (Lys-Gly) (interchain with G-Cter in SUMO2). Serine 215 bears the Phosphoserine mark. 3 disordered regions span residues 228–247 (ELTSQTSQNSGSHLTLDVPN), 260–279 (QEGPLAKSSGESLQNVKQGE), and 318–347 (LHRGEVREEAKHSPSPEPCERQDSSGNEML). A compositionally biased stretch (polar residues) spans 230-240 (TSQTSQNSGSH). Threonine 233 is subject to Phosphothreonine. Residues 318-340 (LHRGEVREEAKHSPSPEPCERQD) show a composition bias toward basic and acidic residues. Serine 332 bears the Phosphoserine mark. In terms of domain architecture, SWIRM spans 363-461 (LKPPEQEVEI…FGCEQAVYNR (99 aa)). The 133-residue stretch at 568-700 (VKVAAEALLI…PLPYSQITCL (133 aa)) folds into the MPN domain. Zn(2+) contacts are provided by histidine 647, histidine 649, and aspartate 660. Residues 647–660 (HSHPAFDPNPSLRD) carry the JAMM motif motif. The short motif at 765 to 769 (LQKLL) is the LXXLL motif element.

Belongs to the peptidase M67A family. MYSM1 subfamily. Component of a large chromatin remodeling complex, at least composed of MYSM1, PCAF, RBM10 and KIF11/TRIP5. Binds histones.

It is found in the nucleus. Its subcellular location is the cytoplasm. Its function is as follows. Metalloprotease with deubiquitinase activity that plays important regulator roles in hematopoietic stem cell function, blood cell production and immune response. Participates in the normal programming of B-cell responses to antigen after the maturation process. Within the cytoplasm, plays critical roles in the repression of innate immunity and autoimmunity. Removes 'Lys-63'-linked polyubiquitins from TRAF3 and TRAF6 complexes. Attenuates NOD2-mediated inflammation and tissue injury by promoting 'Lys-63'-linked deubiquitination of RIPK2 component. Suppresses the CGAS-STING1 signaling pathway by cleaving STING1 'Lys-63'-linked ubiquitin chains. In the nucleus, acts as a hematopoietic transcription regulator derepressing a range of genes essential for normal stem cell differentiation including EBF1 and PAX5 in B-cells, ID2 in NK-cell progenitor or FLT3 in dendritic cell precursors. Deubiquitinates monoubiquitinated histone H2A, a specific tag for epigenetic transcriptional repression, leading to dissociation of histone H1 from the nucleosome. This chain is Deubiquitinase MYSM1 (Mysm1), found in Mus musculus (Mouse).